Consider the following 208-residue polypeptide: MKLLPSVVLKLLLAAVLSALVTGESLEQLRRGLAAGTSNPDPSTGSTDQLLRLGGGRDRKVRDLQEADLDLLRVTLSSKPQALATPSKEEHGKRKKKGKGLGKKRDPCLRKYKDFCIHGECKYVKELRAPSCICHPGYHGERCHGLSLPVENRLYTYDHTTILAVVAVVLSSVCLLVIVGLLMFRYHRRGGYDVENEEKVKLGMTNSH.

Residues 1-19 (MKLLPSVVLKLLLAAVLSA) form the signal peptide. Residues 20-62 (LVTGESLEQLRRGLAAGTSNPDPSTGSTDQLLRLGGGRDRKVR) constitute a propeptide that is removed on maturation. The Extracellular portion of the chain corresponds to 20–160 (LVTGESLEQL…ENRLYTYDHT (141 aa)). Residues 34–55 (AAGTSNPDPSTGSTDQLLRLGG) form a disordered region. A compositionally biased stretch (polar residues) spans 36-49 (GTSNPDPSTGSTDQ). 2 O-linked (GalNAc...) threonine glycosylation sites follow: Thr-75 and Thr-85. The segment at 81-104 (QALATPSKEEHGKRKKKGKGLGKK) is disordered. Basic residues predominate over residues 93-102 (KRKKKGKGLG). Residues 104–144 (KRDPCLRKYKDFCIHGECKYVKELRAPSCICHPGYHGERCH) enclose the EGF-like domain. Intrachain disulfides connect Cys-108–Cys-121, Cys-116–Cys-132, and Cys-134–Cys-143. The segment at 136 to 148 (PGYHGERCHGLSL) is toxin-binding domain. Positions 149 to 208 (PVENRLYTYDHTTILAVVAVVLSSVCLLVIVGLLMFRYHRRGGYDVENEEKVKLGMTNSH) are cleaved as a propeptide — C-terminal. The chain crosses the membrane as a helical span at residues 161 to 184 (TILAVVAVVLSSVCLLVIVGLLMF). The Cytoplasmic portion of the chain corresponds to 185-208 (RYHRRGGYDVENEEKVKLGMTNSH).

As to quaternary structure, interacts with EGFR and ERBB4. Interacts with FBLN1. O-glycosylated.

It localises to the secreted. Its subcellular location is the extracellular space. The protein resides in the cell membrane. Growth factor that mediates its effects via EGFR, ERBB2 and ERBB4. Required for normal cardiac valve formation and normal heart function. Promotes smooth muscle cell proliferation. May be involved in macrophage-mediated cellular proliferation. It is mitogenic for fibroblasts, but not endothelial cells. It is able to bind EGF receptor/EGFR with higher affinity than EGF itself and is a far more potent mitogen for smooth muscle cells than EGF. Also acts as a diphtheria toxin receptor. The polypeptide is Proheparin-binding EGF-like growth factor (HBEGF) (Chlorocebus aethiops (Green monkey)).